We begin with the raw amino-acid sequence, 864 residues long: Arf-GAP with GTPase, ANK repeat and PH domain-containing protein 1 (864 aa).

Positions 66–276 are small GTPase-like; that stretch reads SRSVPELKVG…QTSNGGGSLS (211 aa). The GLD domain maps to 67 to 241; that stretch reads RSVPELKVGI…TRKKQQLSIG (175 aa). GTP contacts are provided by residues 78 to 85, 122 to 126, and 178 to 181; these read GNLASGKS, IRDEG, and TQDA. Disordered regions lie at residues 266 to 343, 405 to 455, and 499 to 549; these read SQTS…IGSG, VPGK…QMAS, and TGLG…LSST. The segment covering 275-289 has biased composition (low complexity); that stretch reads LSDYSSSVPSTPSTS. Residues 322–337 are compositionally biased toward basic and acidic residues; sequence KGSDPDKDKKGLESRA. The 246-residue stretch at 346–591 folds into the PH domain; the sequence is IPIKQGMLLK…WVQAIESQIL (246 aa). Over residues 413-428 the composition is skewed to polar residues; it reads ATSSCAPVASPKTNGL. A compositionally biased stretch (low complexity) spans 507–517; sequence SSPSISSTTSP. Residues 527-537 are compositionally biased toward basic residues; it reads ANRKKHRRKKS. Positions 538 to 549 are enriched in polar residues; the sequence is TSNFKVDGLSST. The 121-residue stretch at 612–732 folds into the Arf-GAP domain; that stretch reads ALALQSIRNL…LFLSPLPCRD (121 aa). The C4-type zinc finger occupies 627–650; the sequence is CVDCDAQSPDWASLNLGALMCIEC. ANK repeat units lie at residues 771–800 and 804–833; these read DRRT…DVMA and HGNT…PDEQ. Positions 845–854 are enriched in low complexity; it reads KNNRNNNSNA. Residues 845 to 864 are disordered; the sequence is KNNRNNNSNAGGSGLMPTLI.

Belongs to the centaurin gamma-like family. As to quaternary structure, homodimer. Interacts with several subunits of the AP-3 protein complex.

The protein resides in the cytoplasm. Functionally, GTPase-activating protein. Directly and specifically regulates the adapter protein 3 (AP-3)-dependent trafficking of proteins in the endosomal-lysosomal system. This Xenopus laevis (African clawed frog) protein is Arf-GAP with GTPase, ANK repeat and PH domain-containing protein 1 (agap1).